Here is a 477-residue protein sequence, read N- to C-terminus: Ribulose bisphosphate carboxylase large chain (477 aa).

The propeptide occupies 1–2 (MS). Pro-3 carries the post-translational modification N-acetylproline. Lys-14 carries the post-translational modification N6,N6,N6-trimethyllysine. Residues Asn-123 and Thr-173 each coordinate substrate. Catalysis depends on Lys-175, which acts as the Proton acceptor. A substrate-binding site is contributed by Lys-177. Residues Lys-201, Asp-203, and Glu-204 each coordinate Mg(2+). Lys-201 is modified (N6-carboxylysine). The active-site Proton acceptor is His-294. Positions 295, 327, and 379 each coordinate substrate.

This sequence belongs to the RuBisCO large chain family. Type I subfamily. Heterohexadecamer of 8 large chains and 8 small chains; disulfide-linked. The disulfide link is formed within the large subunit homodimers. It depends on Mg(2+) as a cofactor. In terms of processing, the disulfide bond which can form in the large chain dimeric partners within the hexadecamer appears to be associated with oxidative stress and protein turnover.

The protein resides in the plastid. It is found in the chloroplast. The catalysed reaction is 2 (2R)-3-phosphoglycerate + 2 H(+) = D-ribulose 1,5-bisphosphate + CO2 + H2O. It carries out the reaction D-ribulose 1,5-bisphosphate + O2 = 2-phosphoglycolate + (2R)-3-phosphoglycerate + 2 H(+). RuBisCO catalyzes two reactions: the carboxylation of D-ribulose 1,5-bisphosphate, the primary event in carbon dioxide fixation, as well as the oxidative fragmentation of the pentose substrate in the photorespiration process. Both reactions occur simultaneously and in competition at the same active site. The chain is Ribulose bisphosphate carboxylase large chain from Nicotiana tomentosiformis (Tobacco).